The sequence spans 275 residues: Dihydroxyacetone phosphatase (275 aa).

The active-site Nucleophile is Asp10. Asp10, Asp12, and Asp206 together coordinate Mg(2+). Asp12 acts as the Proton donor/acceptor in catalysis.

The protein belongs to the HAD-like hydrolase superfamily. Homohexamer. It depends on Mg(2+) as a cofactor.

The catalysed reaction is dihydroxyacetone phosphate + H2O = dihydroxyacetone + phosphate. Functionally, catalyzes dephosphorylation of dihydroxyacetone phosphate (DHAP) to produce 1,3-dihydroxyacetone (DHA). Is the main enzyme responsible for DHA production from catabolism of sugars (glucose, fructose, and sucrose) in C.glutamicum. Displays no activity toward nucleoside monophosphates (AMP, CMP, GMP, or UMP). The polypeptide is Dihydroxyacetone phosphatase (Corynebacterium glutamicum (strain R)).